The sequence spans 440 residues: Cobyrinate a,c-diamide synthase (440 aa).

The GATase cobBQ-type domain maps to 247–428 (RIAIAYDAAF…MHLYFPSNPR (182 aa)). The active-site Nucleophile is Cys-329.

This sequence belongs to the CobB/CbiA family. Requires Mg(2+) as cofactor.

The enzyme catalyses cob(II)yrinate + 2 L-glutamine + 2 ATP + 2 H2O = cob(II)yrinate a,c diamide + 2 L-glutamate + 2 ADP + 2 phosphate + 2 H(+). It functions in the pathway cofactor biosynthesis; adenosylcobalamin biosynthesis; cob(II)yrinate a,c-diamide from sirohydrochlorin (anaerobic route): step 10/10. Its function is as follows. Catalyzes the ATP-dependent amidation of the two carboxylate groups at positions a and c of cobyrinate, using either L-glutamine or ammonia as the nitrogen source. This Picrophilus torridus (strain ATCC 700027 / DSM 9790 / JCM 10055 / NBRC 100828 / KAW 2/3) protein is Cobyrinate a,c-diamide synthase.